Reading from the N-terminus, the 652-residue chain is DNA ligase (652 aa).

Residues 29 to 33, 78 to 79, and Glu107 each bind NAD(+); these read DSEYD and SL. Residue Lys109 is the N6-AMP-lysine intermediate of the active site. Residues Arg130, Glu164, Lys278, and Lys302 each coordinate NAD(+). Zn(2+)-binding residues include Cys395, Cys398, Cys413, and Cys418. One can recognise a BRCT domain in the interval 577–652; sequence AADAALSGMT…IRDEDWLDSL (76 aa).

This sequence belongs to the NAD-dependent DNA ligase family. LigA subfamily. Mg(2+) serves as cofactor. It depends on Mn(2+) as a cofactor.

The enzyme catalyses NAD(+) + (deoxyribonucleotide)n-3'-hydroxyl + 5'-phospho-(deoxyribonucleotide)m = (deoxyribonucleotide)n+m + AMP + beta-nicotinamide D-nucleotide.. In terms of biological role, DNA ligase that catalyzes the formation of phosphodiester linkages between 5'-phosphoryl and 3'-hydroxyl groups in double-stranded DNA using NAD as a coenzyme and as the energy source for the reaction. It is essential for DNA replication and repair of damaged DNA. The polypeptide is DNA ligase (Streptococcus sanguinis (strain SK36)).